A 212-amino-acid chain; its full sequence is Adenylate kinase (212 aa).

Residue glycine 10–threonine 15 coordinates ATP. The tract at residues serine 30–valine 59 is NMP. Residues threonine 31, arginine 36, glutamate 57–valine 59, glycine 86–arginine 89, and glutamine 93 each bind AMP. Residues glycine 127–aspartate 159 form an LID region. ATP is bound by residues arginine 128 and threonine 137–phenylalanine 138. The AMP site is built by arginine 156 and arginine 167. Glutamine 195 contacts ATP.

Belongs to the adenylate kinase family. Monomer.

The protein resides in the cytoplasm. It catalyses the reaction AMP + ATP = 2 ADP. Its pathway is purine metabolism; AMP biosynthesis via salvage pathway; AMP from ADP: step 1/1. Its function is as follows. Catalyzes the reversible transfer of the terminal phosphate group between ATP and AMP. Plays an important role in cellular energy homeostasis and in adenine nucleotide metabolism. The sequence is that of Adenylate kinase from Streptococcus pyogenes serotype M5 (strain Manfredo).